The chain runs to 197 residues: Probable GTP-binding protein EngB (197 aa).

The region spanning 22 to 195 (QLPELALAGR…WRTILNHLKV (174 aa)) is the EngB-type G domain. GTP is bound by residues 30 to 37 (GRSNVGKS), 57 to 61 (GKTQT), 75 to 78 (DVPG), 142 to 145 (TKAD), and 174 to 176 (FSS). Positions 37 and 59 each coordinate Mg(2+).

It belongs to the TRAFAC class TrmE-Era-EngA-EngB-Septin-like GTPase superfamily. EngB GTPase family. The cofactor is Mg(2+).

Functionally, necessary for normal cell division and for the maintenance of normal septation. The chain is Probable GTP-binding protein EngB from Shouchella clausii (strain KSM-K16) (Alkalihalobacillus clausii).